A 986-amino-acid chain; its full sequence is MATYMSTICFGSFECKLPYSPASCEHIVKEREVPASVDPFADLETQLSARLLKQKYATVRVLKNGTFTYRYKTDAQIMRIQKKLERKDREEYHFQMAAPSIVSKITIAGGDPPSKSEPQAPRGIIHTTPRMRKVKTRPIIKLTEGQMNHLIKQIKQIMSEKRGSVHLISKKTTHVQYKKILGAYSAAVRTAHMMGLRRRVDFRCDMWTVGLLQRLARTDKWSNQVRTINIRRGDSGVILNTKSLKGHFGRSSGGLFIVRGSHEGKLYDARSRVTQSILNSMIQFSNADNFWKGLDGNWARMRYPSDHTCVAGLPVEDCGRVAALMAHSILPCYKITCPTCAQQYASLPVSDLFKLLHKHARDGLNRLGADKDRFIHVNKFLIALEHLTEPVDLNLELFNEIFKSIGEKQQAPFKNLNVLNNFFLKGKENTAHEWQVAQLSLLELARFQKNRTDNIKKGDISFFRNKLSAKANWNLYLSCDNQLDKNANFLWGQREYHAKRFFSNFFEEIDPAKGYSAYEIRKHPSGTRKLSIGNLVVPLDLAEFRQKMKGDYRKQPGVSKKCTSSKDGNYVYPCCCTTLDDGSAIESTFYPPTKKHLVIGNSGDQKFVDLPKGDSEMLYIAKQGYCYINVFLAMLINISEEDAKDFTKKVRDMCVPKLGTWPTMMDLATTCAQMRIFYPDVHDAELPRILVDHDTQTCHVVDSFGSQTTGYHILKASSVSQLILFANDELESDIKHYRVGGVPNASPELGSTISPFREGGVIMSESAALKLLLKGIFRPKVMRQLLLDEPYLLILSILSPGILMAMYNNGIFELAVRLWINEKQSIAMIASLLSALALRVSAAETLVAQRIIIDAAATDLLDATCDGFNLHLTYPTALMVLQVVKNRNECDDTLFKAGFPSYNTSVVQIMEKKLSKSLERCLERFNLARKLSATWYSYRAKRSIHSVHKTHRKGRFERVIQHITTSVLGPKRPGGQRHCLRIERAI.

One can recognise a Peptidase S30 domain in the interval 141–284 (KLTEGQMNHL…QSILNSMIQF (144 aa)). Active-site for P1 proteinase activity residues include His-192, Asp-201, and Ser-235. An Involved in interaction with stylet and aphid transmission motif is present at residues 334–337 (KITC). The short motif at 592–594 (PTK) is the Involved in virions binding and aphid transmission element. The Peptidase C6 domain occupies 618-740 (LYIAKQGYCY…ESDIKHYRVG (123 aa)). Catalysis depends on for helper component proteinase activity residues Cys-626 and His-699.

The protein belongs to the potyviridae P3N-PIPO polyprotein family. Interacts (via PIPO domain) with host PCaP1 protein; this interaction may help to anchor the movement complex to the plasma membrane from which the complex could move to the plasmodesmata. In terms of processing, potyviral RNA is expressed as two polyproteins which undergo post-translational proteolytic processing. Genome polyprotein is processed by NIa-pro, P1 and HC-pro proteinases resulting in the production of at least ten individual proteins. P3N-PIPO is cleaved by P1 and HC-pro proteinases resulting in the production of three individual proteins. The P1 proteinase and the HC-pro cleave only their respective C-termini autocatalytically.

Its subcellular location is the host cell junction. It localises to the host plasmodesma. It carries out the reaction Hydrolyzes a Gly-|-Gly bond at its own C-terminus, commonly in the sequence -Tyr-Xaa-Val-Gly-|-Gly, in the processing of the potyviral polyprotein.. Required for aphid transmission and also has proteolytic activity. Only cleaves a Gly-Gly dipeptide at its own C-terminus. Interacts with virions and aphid stylets. Acts as a suppressor of RNA-mediated gene silencing, also known as post-transcriptional gene silencing (PTGS), a mechanism of plant viral defense that limits the accumulation of viral RNAs. May have RNA-binding activity. Functionally, allows efficient cell to cell propagation, by bypassing the host cell wall barrier. Transports viral genome to neighboring plant cells directly through plasmosdesmata, without any budding. This Potato virus Y (strain N) (PVY) protein is P3N-PIPO polyprotein.